A 392-amino-acid polypeptide reads, in one-letter code: uncharacterized protein (392 aa).

This sequence belongs to the peptidase M24 family.

This is an uncharacterized protein from Sinorhizobium fredii (strain NBRC 101917 / NGR234).